We begin with the raw amino-acid sequence, 286 residues long: Bifunctional protein FolD (286 aa).

Residues 165–167 (GRS), S190, and V231 each bind NADP(+).

The protein belongs to the tetrahydrofolate dehydrogenase/cyclohydrolase family. Homodimer.

The enzyme catalyses (6R)-5,10-methylene-5,6,7,8-tetrahydrofolate + NADP(+) = (6R)-5,10-methenyltetrahydrofolate + NADPH. It carries out the reaction (6R)-5,10-methenyltetrahydrofolate + H2O = (6R)-10-formyltetrahydrofolate + H(+). It participates in one-carbon metabolism; tetrahydrofolate interconversion. Functionally, catalyzes the oxidation of 5,10-methylenetetrahydrofolate to 5,10-methenyltetrahydrofolate and then the hydrolysis of 5,10-methenyltetrahydrofolate to 10-formyltetrahydrofolate. This chain is Bifunctional protein FolD, found in Bacillus thuringiensis (strain Al Hakam).